The following is a 415-amino-acid chain: Gamma-glutamyl phosphate reductase (415 aa).

The protein belongs to the gamma-glutamyl phosphate reductase family.

The protein localises to the cytoplasm. The enzyme catalyses L-glutamate 5-semialdehyde + phosphate + NADP(+) = L-glutamyl 5-phosphate + NADPH + H(+). It participates in amino-acid biosynthesis; L-proline biosynthesis; L-glutamate 5-semialdehyde from L-glutamate: step 2/2. In terms of biological role, catalyzes the NADPH-dependent reduction of L-glutamate 5-phosphate into L-glutamate 5-semialdehyde and phosphate. The product spontaneously undergoes cyclization to form 1-pyrroline-5-carboxylate. This Mycolicibacterium vanbaalenii (strain DSM 7251 / JCM 13017 / BCRC 16820 / KCTC 9966 / NRRL B-24157 / PYR-1) (Mycobacterium vanbaalenii) protein is Gamma-glutamyl phosphate reductase.